The sequence spans 144 residues: MLIPKRVKYRKQHRPRGNGGVSKGGREVSFGEYGIQALEAGWITNRQIEAARIAMTRYIKRGGKVWIRIFPDKPITQKPAETRMGSGKGAPEHWVAVVKPGRVMFEVAGVPEATAREAMRLAMHKLPVKCKFVVRGEVGEANES.

Residues 1-16 (MLIPKRVKYRKQHRPR) are compositionally biased toward basic residues. The tract at residues 1 to 25 (MLIPKRVKYRKQHRPRGNGGVSKGG) is disordered.

Belongs to the universal ribosomal protein uL16 family. In terms of assembly, part of the 50S ribosomal subunit.

Its function is as follows. Binds 23S rRNA and is also seen to make contacts with the A and possibly P site tRNAs. This is Large ribosomal subunit protein uL16 from Desulforamulus reducens (strain ATCC BAA-1160 / DSM 100696 / MI-1) (Desulfotomaculum reducens).